Reading from the N-terminus, the 122-residue chain is Large ribosomal subunit protein uL14 (122 aa).

This sequence belongs to the universal ribosomal protein uL14 family. Part of the 50S ribosomal subunit. Forms a cluster with proteins L3 and L19. In the 70S ribosome, L14 and L19 interact and together make contacts with the 16S rRNA in bridges B5 and B8.

Functionally, binds to 23S rRNA. Forms part of two intersubunit bridges in the 70S ribosome. In Leifsonia xyli subsp. xyli (strain CTCB07), this protein is Large ribosomal subunit protein uL14.